The primary structure comprises 127 residues: Fluoride-specific ion channel FluC (127 aa).

Helical transmembrane passes span Leu4–Ile24, Tyr38–Phe58, Ile71–Val91, and Leu104–Leu124. Residues Gly78 and Thr81 each contribute to the Na(+) site.

The protein belongs to the fluoride channel Fluc/FEX (TC 1.A.43) family.

The protein localises to the cell inner membrane. It carries out the reaction fluoride(in) = fluoride(out). Its activity is regulated as follows. Na(+) is not transported, but it plays an essential structural role and its presence is essential for fluoride channel function. Fluoride-specific ion channel. Important for reducing fluoride concentration in the cell, thus reducing its toxicity. The sequence is that of Fluoride-specific ion channel FluC from Vibrio campbellii (strain ATCC BAA-1116).